The chain runs to 599 residues: DNA primase (599 aa).

A CHC2-type zinc finger spans residues 40–64; the sequence is CPFHGENTPSFSVSPDKQLYHCFGC. The region spanning 259-342 is the Toprim domain; the sequence is NEAVLFEGYV…KVAMIPDGLD (84 aa). Residues glutamate 265, aspartate 309, and aspartate 311 each contribute to the Mg(2+) site.

The protein belongs to the DnaG primase family. Monomer. Interacts with DnaB. It depends on Zn(2+) as a cofactor. Requires Mg(2+) as cofactor.

It carries out the reaction ssDNA + n NTP = ssDNA/pppN(pN)n-1 hybrid + (n-1) diphosphate.. In terms of biological role, RNA polymerase that catalyzes the synthesis of short RNA molecules used as primers for DNA polymerase during DNA replication. The sequence is that of DNA primase from Halalkalibacterium halodurans (strain ATCC BAA-125 / DSM 18197 / FERM 7344 / JCM 9153 / C-125) (Bacillus halodurans).